We begin with the raw amino-acid sequence, 527 residues long: Protein SDS24 (527 aa).

Composition is skewed to low complexity over residues 1 to 22 and 55 to 74; these read MAST…LPTS and TPPT…TPAP. Residues 1–75 form a disordered region; it reads MASTSNTFPP…PGCAATPAPL (75 aa). S94 is modified (phosphoserine). CBS domains lie at 114–175, 198–256, 283–342, and 443–512; these read IEQN…KITV, LTPK…NARS, TSRQ…QYPL, and LNSH…GNKE. Over residues 424–447 the composition is skewed to low complexity; sequence AQSSANGATPMSKSSSSTSLNSHS. Disordered stretches follow at residues 424–478 and 508–527; these read AQSS…TNTP and TGNK…SIAM. S458 and S524 each carry phosphoserine.

It belongs to the SDS23 family.

It is found in the cytoplasm. The protein resides in the nucleus. Its function is as follows. Involved in DNA replication and cell separation during budding. In Saccharomyces cerevisiae (strain YJM789) (Baker's yeast), this protein is Protein SDS24 (SDS24).